Consider the following 200-residue polypeptide: Holliday junction branch migration complex subunit RuvA (200 aa).

Positions 1–64 are domain I; that stretch reads MIGHLRGIIV…EDAHTLYGFH (64 aa). Residues 65-143 are domain II; it reads NDHERRLFRA…RWHTNDTPSP (79 aa). The interval 133-152 is disordered; sequence SRWHTNDTPSPEGLRSSNTQ. A flexible linker region spans residues 144–148; sequence EGLRS. The interval 149-200 is domain III; sequence SNTQPTQDAISALMALGYKPQEAKRAIDAIQKPDLSAETLIRLALKQMVLGT.

Belongs to the RuvA family. In terms of assembly, homotetramer. Forms an RuvA(8)-RuvB(12)-Holliday junction (HJ) complex. HJ DNA is sandwiched between 2 RuvA tetramers; dsDNA enters through RuvA and exits via RuvB. An RuvB hexamer assembles on each DNA strand where it exits the tetramer. Each RuvB hexamer is contacted by two RuvA subunits (via domain III) on 2 adjacent RuvB subunits; this complex drives branch migration. In the full resolvosome a probable DNA-RuvA(4)-RuvB(12)-RuvC(2) complex forms which resolves the HJ.

It localises to the cytoplasm. In terms of biological role, the RuvA-RuvB-RuvC complex processes Holliday junction (HJ) DNA during genetic recombination and DNA repair, while the RuvA-RuvB complex plays an important role in the rescue of blocked DNA replication forks via replication fork reversal (RFR). RuvA specifically binds to HJ cruciform DNA, conferring on it an open structure. The RuvB hexamer acts as an ATP-dependent pump, pulling dsDNA into and through the RuvAB complex. HJ branch migration allows RuvC to scan DNA until it finds its consensus sequence, where it cleaves and resolves the cruciform DNA. The sequence is that of Holliday junction branch migration complex subunit RuvA from Coxiella burnetii (strain CbuK_Q154) (Coxiella burnetii (strain Q154)).